The primary structure comprises 295 residues: Elongation factor Ts (295 aa).

The tract at residues 79–82 (TDFV) is involved in Mg(2+) ion dislocation from EF-Tu.

This sequence belongs to the EF-Ts family.

Its subcellular location is the cytoplasm. In terms of biological role, associates with the EF-Tu.GDP complex and induces the exchange of GDP to GTP. It remains bound to the aminoacyl-tRNA.EF-Tu.GTP complex up to the GTP hydrolysis stage on the ribosome. This is Elongation factor Ts from Mycoplasma mycoides subsp. mycoides SC (strain CCUG 32753 / NCTC 10114 / PG1).